The sequence spans 136 residues: ATP synthase epsilon chain (136 aa).

The interval M106–D136 is disordered.

It belongs to the ATPase epsilon chain family. In terms of assembly, F-type ATPases have 2 components, CF(1) - the catalytic core - and CF(0) - the membrane proton channel. CF(1) has five subunits: alpha(3), beta(3), gamma(1), delta(1), epsilon(1). CF(0) has three main subunits: a, b and c.

Its subcellular location is the cellular thylakoid membrane. In terms of biological role, produces ATP from ADP in the presence of a proton gradient across the membrane. The chain is ATP synthase epsilon chain from Synechococcus sp. (strain CC9605).